Reading from the N-terminus, the 1295-residue chain is Protein glp-1 (1295 aa).

Positions 1-15 (MRVLLILLAFFAPIA) are cleaved as a signal peptide. The Extracellular segment spans residues 16 to 764 (SQLMGGECGR…NEIDEGWSRS (749 aa)). 4 consecutive EGF-like domains span residues 19–58 (MGGE…AFCE), 117–152 (GVNP…SYCE), 154–190 (GIDH…RYCE), and 190–230 (ERTE…EFCN). Intrachain disulfides connect Cys-23-Cys-35, Cys-29-Cys-46, Cys-48-Cys-57, Cys-121-Cys-131, Cys-126-Cys-140, Cys-142-Cys-151, Cys-158-Cys-169, Cys-163-Cys-178, Cys-180-Cys-189, Cys-201-Cys-206, Cys-220-Cys-229, Cys-236-Cys-248, Cys-242-Cys-257, Cys-259-Cys-268, Cys-275-Cys-286, Cys-280-Cys-296, Cys-298-Cys-307, Cys-329-Cys-342, Cys-336-Cys-347, Cys-349-Cys-358, Cys-373-Cys-384, Cys-378-Cys-394, Cys-396-Cys-405, Cys-411-Cys-422, Cys-416-Cys-431, Cys-433-Cys-442, Cys-450-Cys-461, Cys-455-Cys-467, Cys-469-Cys-478, Cys-496-Cys-519, Cys-501-Cys-514, Cys-510-Cys-526, Cys-536-Cys-560, Cys-542-Cys-555, Cys-551-Cys-567, Cys-582-Cys-595, and Cys-591-Cys-607. The 38-residue stretch at 232–269 (DKNECLIEETCVNNSTCFNLHGDFTCTCKPGYAGKYCE) folds into the EGF-like 5; calcium-binding domain. N-linked (GlcNAc...) asparagine glycosylation is found at Asn-244 and Asn-245. EGF-like domains follow at residues 271–308 (AIDM…QRCE), 316–359 (GGIH…DRCE), 369–406 (DIQS…LNCE), 407–443 (QHLL…DYCE), and 446–479 (DRQL…PTCE). Residue Asn-333 is glycosylated (N-linked (GlcNAc...) asparagine). N-linked (GlcNAc...) asparagine glycosylation is present at Asn-381. 3 LNR repeats span residues 496–532 (CEQR…GQRP), 536–577 (CQYP…CPAH), and 581–612 (HCIE…NGTE). N-linked (GlcNAc...) asparagine glycans are attached at residues Asn-609 and Asn-675. The chain crosses the membrane as a helical span at residues 765-786 (QVILFACIAFLAFGTVVAGVIA). Residues 787–1295 (KNGPERSRKR…AEQMNGSFYC (509 aa)) lie on the Cytoplasmic side of the membrane. ANK repeat units follow at residues 961–990 (DENT…NPTI), 994–1023 (SERS…LLKE), 1030–1062 (NGMT…KLDY), 1074–1103 (KGRT…NKDK), and 1107–1136 (DGRT…SLGI). The disordered stretch occupies residues 1177–1244 (IVKSGHGAKS…TTSTPNRMET (68 aa)). Polar residues predominate over residues 1201-1210 (KTPTSAASSR). Over residues 1221–1239 (DGSFSSPSPHYYPTTTSTP) the composition is skewed to low complexity.

In terms of assembly, interacts with sel-10. When activated, the glp-1/Notch intracellular domain (NICD) may become a component of a complex consisting of at least the NICD, lag-1 and lag-3. Post-translationally, upon binding its ligands, it is cleaved (S2 cleavage) in its extracellular domain, close to the transmembrane domain. S2 cleavage is probably mediated by the metalloproteases adm-4 and sup-17. It is then cleaved (S3 cleavage) downstream of its transmembrane domain, releasing it from the cell membrane; S3 cleavage requires a multiprotein gamma-secretase complex, which may include presenilin sel-12. As to expression, expressed in the distal mitotic region of the germ line. May be absent from the gonadal distal tip cell (DTC).

Its subcellular location is the cell membrane. It is found in the cell projection. The protein resides in the axon. The protein localises to the nucleus. Essential signaling protein which has a major role in germline and embryonic development; involved in cell fate decisions that require cell-cell interactions. Probable membrane-bound receptor for putative ligands lag-2 and apx-1. Upon ligand activation, and releasing from the cell membrane, the glp-1/Notch intracellular domain (NICD) probably forms a transcriptional activator complex with lag-1 and lag-3 and regulates expression of various genes; targets in the germline include lst-1 and sygl-1. Involved in the specification of the cell fates of the blastomeres, ABa and ABp. Proper signaling by glp-1 induces ABa descendants to produce anterior pharyngeal cells, and ABp descendants to adopt a different fate. Contributes to the establishment of the dorsal-ventral axis in early embryos. Required in postmitotic neurons in order to maintain the developmentally arrested larval state known as dauer, probably in response to lag-2. Regulates germ cell mitotic proliferation probably by regulating MAP kinase phosphatase lip-1 expression. Required for oocyte growth control. Plays a negative role in lifespan. The sequence is that of Protein glp-1 from Caenorhabditis elegans.